We begin with the raw amino-acid sequence, 318 residues long: Ribose-phosphate pyrophosphokinase 1 (318 aa).

96-101 (RQDKKD) provides a ligand contact to ATP. 4 residues coordinate Mg(2+): D128, H130, D139, and D143. H130 provides a ligand contact to ATP. Positions 212 to 227 (KDRVAILVDDMADTCG) are binding of phosphoribosylpyrophosphate.

This sequence belongs to the ribose-phosphate pyrophosphokinase family. In terms of assembly, homodimer. The active form is probably a hexamer composed of 3 homodimers. It depends on Mg(2+) as a cofactor.

It catalyses the reaction D-ribose 5-phosphate + ATP = 5-phospho-alpha-D-ribose 1-diphosphate + AMP + H(+). The protein operates within metabolic intermediate biosynthesis; 5-phospho-alpha-D-ribose 1-diphosphate biosynthesis; 5-phospho-alpha-D-ribose 1-diphosphate from D-ribose 5-phosphate (route I): step 1/1. With respect to regulation, activated by magnesium and inorganic phosphate. Its function is as follows. Catalyzes the synthesis of phosphoribosylpyrophosphate (PRPP) that is essential for nucleotide synthesis. This is Ribose-phosphate pyrophosphokinase 1 (PRPS1) from Macaca fascicularis (Crab-eating macaque).